A 256-amino-acid chain; its full sequence is Imidazole glycerol phosphate synthase subunit HisF (256 aa).

Residues Asp12 and Asp131 contribute to the active site.

It belongs to the HisA/HisF family. In terms of assembly, heterodimer of HisH and HisF.

Its subcellular location is the cytoplasm. The catalysed reaction is 5-[(5-phospho-1-deoxy-D-ribulos-1-ylimino)methylamino]-1-(5-phospho-beta-D-ribosyl)imidazole-4-carboxamide + L-glutamine = D-erythro-1-(imidazol-4-yl)glycerol 3-phosphate + 5-amino-1-(5-phospho-beta-D-ribosyl)imidazole-4-carboxamide + L-glutamate + H(+). The protein operates within amino-acid biosynthesis; L-histidine biosynthesis; L-histidine from 5-phospho-alpha-D-ribose 1-diphosphate: step 5/9. Functionally, IGPS catalyzes the conversion of PRFAR and glutamine to IGP, AICAR and glutamate. The HisF subunit catalyzes the cyclization activity that produces IGP and AICAR from PRFAR using the ammonia provided by the HisH subunit. In Bifidobacterium longum (strain NCC 2705), this protein is Imidazole glycerol phosphate synthase subunit HisF.